A 283-amino-acid chain; its full sequence is Small ribosomal subunit protein uS3 (283 aa).

Residues 39-107 (VRAYLKTKLK…PVHVNIEEIR (69 aa)) enclose the KH type-2 domain. Residues 219–283 (ASDDDKKRRG…AAVSAEKAGE (65 aa)) are disordered. Residues 221 to 236 (DDDKKRRGPRRDDGKP) show a composition bias toward basic and acidic residues. Over residues 237 to 260 (SGRPRAPRPEGQPGAAAPGSAPAA) the composition is skewed to low complexity.

It belongs to the universal ribosomal protein uS3 family. In terms of assembly, part of the 30S ribosomal subunit. Forms a tight complex with proteins S10 and S14.

Binds the lower part of the 30S subunit head. Binds mRNA in the 70S ribosome, positioning it for translation. This Janthinobacterium sp. (strain Marseille) (Minibacterium massiliensis) protein is Small ribosomal subunit protein uS3.